The following is a 197-amino-acid chain: Glycerol-3-phosphate acyltransferase (197 aa).

5 helical membrane-spanning segments follow: residues 1 to 21 (MNILIIFASYLLGSLPTGFLI), 78 to 98 (LIEVIAGISAISGHIWPIWLG), 111 to 131 (MFLALSWKVGLASLGIFLIVL), 136 to 155 (FVSLSSISAAILLPIFMFFY), and 159 to 176 (FIHTYFFISLIVALLVIW).

It belongs to the PlsY family. In terms of assembly, probably interacts with PlsX.

It is found in the cell inner membrane. It catalyses the reaction an acyl phosphate + sn-glycerol 3-phosphate = a 1-acyl-sn-glycero-3-phosphate + phosphate. It functions in the pathway lipid metabolism; phospholipid metabolism. In terms of biological role, catalyzes the transfer of an acyl group from acyl-phosphate (acyl-PO(4)) to glycerol-3-phosphate (G3P) to form lysophosphatidic acid (LPA). This enzyme utilizes acyl-phosphate as fatty acyl donor, but not acyl-CoA or acyl-ACP. The sequence is that of Glycerol-3-phosphate acyltransferase from Prochlorococcus marinus (strain MIT 9215).